Reading from the N-terminus, the 312-residue chain is Lipoyl synthase (312 aa).

Residues cysteine 51, cysteine 56, cysteine 62, cysteine 77, cysteine 81, cysteine 84, and serine 290 each coordinate [4Fe-4S] cluster. Positions 63-280 constitute a Radical SAM core domain; that stretch reads WSRKTATYLA…RTIGTSLGLF (218 aa).

The protein belongs to the radical SAM superfamily. Lipoyl synthase family. The cofactor is [4Fe-4S] cluster.

It is found in the cytoplasm. The catalysed reaction is [[Fe-S] cluster scaffold protein carrying a second [4Fe-4S](2+) cluster] + N(6)-octanoyl-L-lysyl-[protein] + 2 oxidized [2Fe-2S]-[ferredoxin] + 2 S-adenosyl-L-methionine + 4 H(+) = [[Fe-S] cluster scaffold protein] + N(6)-[(R)-dihydrolipoyl]-L-lysyl-[protein] + 4 Fe(3+) + 2 hydrogen sulfide + 2 5'-deoxyadenosine + 2 L-methionine + 2 reduced [2Fe-2S]-[ferredoxin]. Its pathway is protein modification; protein lipoylation via endogenous pathway; protein N(6)-(lipoyl)lysine from octanoyl-[acyl-carrier-protein]: step 2/2. Catalyzes the radical-mediated insertion of two sulfur atoms into the C-6 and C-8 positions of the octanoyl moiety bound to the lipoyl domains of lipoate-dependent enzymes, thereby converting the octanoylated domains into lipoylated derivatives. In Chlamydia caviae (strain ATCC VR-813 / DSM 19441 / 03DC25 / GPIC) (Chlamydophila caviae), this protein is Lipoyl synthase.